The chain runs to 156 residues: Small ribosomal subunit protein uS7A/uS7B (156 aa).

Belongs to the universal ribosomal protein uS7 family. As to quaternary structure, part of the 30S ribosomal subunit. Contacts proteins S9 and S11.

One of the primary rRNA binding proteins, it binds directly to 16S rRNA where it nucleates assembly of the head domain of the 30S subunit. Is located at the subunit interface close to the decoding center, probably blocks exit of the E-site tRNA. This is Small ribosomal subunit protein uS7A/uS7B from Cereibacter sphaeroides (strain ATCC 17029 / ATH 2.4.9) (Rhodobacter sphaeroides).